Reading from the N-terminus, the 353-residue chain is Guanine nucleotide-binding protein alpha-3 subunit (353 aa).

Gly-2 is lipidated: N-myristoyl glycine. Cys-4 carries the S-palmitoyl cysteine lipid modification. Residues Lys-32–Leu-353 enclose the G-alpha domain. Positions Lys-35–Thr-48 are G1 motif. GTP-binding positions include Gly-40–Ser-47, Leu-176–Thr-182, Asp-201–Gln-205, Asn-270–Asp-273, and Ala-326. Ser-47 and Thr-182 together coordinate Mg(2+). Residues Asp-174–Thr-182 form a G2 motif region. The G3 motif stretch occupies residues Phe-197–Arg-206. The interval Ile-266–Asp-273 is G4 motif. The interval Thr-324–Thr-329 is G5 motif.

Belongs to the G-alpha family. G(q) subfamily. In terms of assembly, g proteins are composed of 3 units; alpha, beta and gamma. The alpha chain contains the guanine nucleotide binding site.

Functionally, guanine nucleotide-binding proteins (G proteins) are involved as modulators or transducers in various transmembrane signaling systems. Promotes transcription of 3',5'-cyclic phosphodiesterases pde-1 and pde-5, leading to reduced cGMP levels in sensory neurons. This causes suppression of insulin production and signaling which leads to increased daf-16 activity and contributes to increased adult lifespan and resistance to oxidative stress. In addition, by reducing cGMP levels, inhibits TGF-beta signaling pathways. Involved in behavioral response to P.aeruginosa by controlling the expression of daf-7, a member of the TGF-beta family, in ASJ sensory neurons. Plays a role in the avoidance response to the noxious chemical quinine in ASH sensory neurons. The protein is Guanine nucleotide-binding protein alpha-3 subunit of Caenorhabditis elegans.